A 453-amino-acid chain; its full sequence is Tryptophan biosynthesis protein TrpCF (453 aa).

The segment at 1–257 (MMQTVLAKIV…AAVRRVLLGE (257 aa)) is indole-3-glycerol phosphate synthase. The segment at 258-453 (NKVCGLTRGQ…ASVFQTLRAY (196 aa)) is N-(5'-phosphoribosyl)anthranilate isomerase.

It in the N-terminal section; belongs to the TrpC family. This sequence in the C-terminal section; belongs to the TrpF family. Monomer.

It catalyses the reaction N-(5-phospho-beta-D-ribosyl)anthranilate = 1-(2-carboxyphenylamino)-1-deoxy-D-ribulose 5-phosphate. The catalysed reaction is 1-(2-carboxyphenylamino)-1-deoxy-D-ribulose 5-phosphate + H(+) = (1S,2R)-1-C-(indol-3-yl)glycerol 3-phosphate + CO2 + H2O. Its pathway is amino-acid biosynthesis; L-tryptophan biosynthesis; L-tryptophan from chorismate: step 3/5. The protein operates within amino-acid biosynthesis; L-tryptophan biosynthesis; L-tryptophan from chorismate: step 4/5. Bifunctional enzyme that catalyzes two sequential steps of tryptophan biosynthetic pathway. The first reaction is catalyzed by the isomerase, coded by the TrpF domain; the second reaction is catalyzed by the synthase, coded by the TrpC domain. This is Tryptophan biosynthesis protein TrpCF (trpC) from Escherichia coli O157:H7.